A 209-amino-acid polypeptide reads, in one-letter code: C-type lectin domain family 6 member A (209 aa).

Residues 1 to 20 (MVQERQSQGKGVCWTLRLWS) are Cytoplasmic-facing. Residues 21-43 (AAVISMLLLSTCFIASCVVTYQF) form a helical; Signal-anchor for type II membrane protein membrane-spanning segment. Topologically, residues 44–209 (IMDQPSRRLY…SICEMKKIYL (166 aa)) are extracellular. Cystine bridges form between Cys64–Cys78, Cys79–Cys90, Cys107–Cys202, and Cys176–Cys194. The C-type lectin domain occupies 86–203 (FGSSCYLIST…CDSKHNSICE (118 aa)). 3 residues coordinate Ca(2+): Val116, Asn118, and Glu122. Asn131 carries N-linked (GlcNAc...) asparagine glycosylation. Residues Glu168, Asn170, and Glu174 each coordinate Ca(2+). Residues 168 to 170 (EPN), Glu174, Trp182, and 190 to 191 (ND) contribute to the alpha-D-mannopyranose site. Residues Asn190, Asp191, and Glu203 each contribute to the Ca(2+) site.

In terms of assembly, associated with FCER1G. Heterodimer with CLEC4D; this heterodimer forms a pattern recognition receptor (PRR) against fungal infection. In terms of tissue distribution, expressed by the XS52 DC (dendritic cell) line (at protein level). Expressed constitutively by the epidermis, and skin resident DC appear to be the major source of this expression. Expressed in the spleen and thymus. Expression was undetectable in non-DC lines, including macrophage lines (J774 and Raw), T-cell lines (7-17, HDK-1, and D10), B-cell hybridoma (5C5), a keratinocyte line (Pam 212), and a fibroblast line (NS01).

The protein resides in the cell membrane. In terms of biological role, calcium-dependent lectin that acts as a pattern recognition receptor (PRR) of the innate immune system: specifically recognizes and binds alpha-mannans on C.albicans hypheas. Binding of C.albicans alpha-mannans to this receptor complex leads to phosphorylation of the immunoreceptor tyrosine-based activation motif (ITAM) of FCER1G, triggering activation of SYK, CARD9 and NF-kappa-B, consequently driving maturation of antigen-presenting cells and shaping antigen-specific priming of T-cells toward effector T-helper 1 and T-helper 17 cell subtypes. Also recognizes, in a mannose-dependent manner, allergens from house dust mite and fungi, by promoting cysteinyl leukotriene production. Recognizes soluble elements from the eggs of Shistosoma mansoni altering adaptive immune responses. This chain is C-type lectin domain family 6 member A, found in Mus musculus (Mouse).